Consider the following 277-residue polypeptide: Shikimate dehydrogenase (NADP(+)) (277 aa).

Shikimate is bound by residues 15 to 17 (SKS) and threonine 64. Catalysis depends on lysine 68, which acts as the Proton acceptor. Positions 89 and 104 each coordinate shikimate. NADP(+) is bound by residues 129–133 (GAGGA), 153–158 (NRTAKR), and methionine 217. Tyrosine 219 serves as a coordination point for shikimate. Residue glycine 242 coordinates NADP(+).

Belongs to the shikimate dehydrogenase family. As to quaternary structure, homodimer.

It carries out the reaction shikimate + NADP(+) = 3-dehydroshikimate + NADPH + H(+). Its pathway is metabolic intermediate biosynthesis; chorismate biosynthesis; chorismate from D-erythrose 4-phosphate and phosphoenolpyruvate: step 4/7. Its function is as follows. Involved in the biosynthesis of the chorismate, which leads to the biosynthesis of aromatic amino acids. Catalyzes the reversible NADPH linked reduction of 3-dehydroshikimate (DHSA) to yield shikimate (SA). In Hydrogenovibrio crunogenus (strain DSM 25203 / XCL-2) (Thiomicrospira crunogena), this protein is Shikimate dehydrogenase (NADP(+)).